Reading from the N-terminus, the 414-residue chain is Tryptophan synthase beta chain (414 aa).

At Lys-109 the chain carries N6-(pyridoxal phosphate)lysine.

It belongs to the TrpB family. As to quaternary structure, tetramer of two alpha and two beta chains. Pyridoxal 5'-phosphate serves as cofactor.

The enzyme catalyses (1S,2R)-1-C-(indol-3-yl)glycerol 3-phosphate + L-serine = D-glyceraldehyde 3-phosphate + L-tryptophan + H2O. The protein operates within amino-acid biosynthesis; L-tryptophan biosynthesis; L-tryptophan from chorismate: step 5/5. Functionally, the beta subunit is responsible for the synthesis of L-tryptophan from indole and L-serine. The protein is Tryptophan synthase beta chain of Prochlorococcus marinus (strain AS9601).